We begin with the raw amino-acid sequence, 269 residues long: Meiotic drive suppressor wtf5 (269 aa).

Residues 1–67 (MKNNHTSLKS…HRENHSYRTT (67 aa)) are disordered. The segment covering 19–30 (KTDHEIDLEKGP) has biased composition (basic and acidic residues). 5 helical membrane-spanning segments follow: residues 73–93 (LLIKLLISFTSIILFNAPAVC), 110–130 (WTLFGFWCLVCTLALIFLTYF), 140–160 (VTVISLAKCVKVTAIFLAQCV), 174–194 (WENMPMAFSEVFLFNILVGSP), and 216–236 (IIFVVLSILVFIAETVKPGSI).

This sequence belongs to the WTF family. As to quaternary structure, homomer. Interacts with other proteins that exhibit high sequence similarity.

Its subcellular location is the spore membrane. The protein localises to the vacuole membrane. Acts as a suppressor component of the dual wtf meiotic drive system, and can suppress but not confer meiotic drive by compatible poisons. Wtf meiotic drive systems promote unequal transmission of alleles from the parental zygote to progeny spores by encoding a poison and an antidote from the same locus; the poison is trans-acting and forms toxic aggregates in all spores within an ascus, wherease the antidote is spore-specific and targets aggregates for degradation by the vacuole. Meiotic drive by wtf systems therefore lead to poisoning of all progeny that do not inherit the dual poison/antidote allele, or express a compatible antidote. This is Meiotic drive suppressor wtf5 from Schizosaccharomyces kambucha (Fission yeast).